The chain runs to 317 residues: Proline iminopeptidase (317 aa).

An AB hydrolase-1 domain is found at 41–296 (VFIHGGPGGG…ELHIVEGAGH (256 aa)). The active-site Nucleophile is Ser-113. Residue Asp-268 is part of the active site. His-296 serves as the catalytic Proton donor.

The protein belongs to the peptidase S33 family. Monomer.

Its subcellular location is the cytoplasm. It carries out the reaction Release of N-terminal proline from a peptide.. Specifically catalyzes the removal of N-terminal proline residues from peptides. This Serratia marcescens protein is Proline iminopeptidase (pip).